The chain runs to 601 residues: Elongation factor 4 (601 aa).

One can recognise a tr-type G domain in the interval 7-189 (RNIRNFSIIA…AIVHRIPPPK (183 aa)). GTP is bound by residues 19–24 (DHGKST) and 136–139 (NKID).

The protein belongs to the TRAFAC class translation factor GTPase superfamily. Classic translation factor GTPase family. LepA subfamily.

Its subcellular location is the cell inner membrane. It catalyses the reaction GTP + H2O = GDP + phosphate + H(+). Required for accurate and efficient protein synthesis under certain stress conditions. May act as a fidelity factor of the translation reaction, by catalyzing a one-codon backward translocation of tRNAs on improperly translocated ribosomes. Back-translocation proceeds from a post-translocation (POST) complex to a pre-translocation (PRE) complex, thus giving elongation factor G a second chance to translocate the tRNAs correctly. Binds to ribosomes in a GTP-dependent manner. The protein is Elongation factor 4 of Xanthomonas campestris pv. campestris (strain 8004).